The sequence spans 120 residues: MSKQNELNARRKQRVRARIKKYGSGRPRLSVFRSSKHIYAQIIDDTAGHTLAAASSLDKDLREGLKTGADIDAAKAVGKLIAERATAKGVTAVVFDRGAYLFHGRVKALADAAREAGLQF.

It belongs to the universal ribosomal protein uL18 family. Part of the 50S ribosomal subunit; part of the 5S rRNA/L5/L18/L25 subcomplex. Contacts the 5S and 23S rRNAs.

This is one of the proteins that bind and probably mediate the attachment of the 5S RNA into the large ribosomal subunit, where it forms part of the central protuberance. This chain is Large ribosomal subunit protein uL18, found in Rhodospirillum centenum (strain ATCC 51521 / SW).